The primary structure comprises 51 residues: MARNKPLGLKIRLMKAVKSNRRVPGWVMVKTDRRVTQNYKRRNWRRSNLKA.

It belongs to the eukaryotic ribosomal protein eL39 family.

The protein is Large ribosomal subunit protein eL39 of Picrophilus torridus (strain ATCC 700027 / DSM 9790 / JCM 10055 / NBRC 100828 / KAW 2/3).